Consider the following 278-residue polypeptide: Release factor glutamine methyltransferase (278 aa).

Residues 120–124 (GTGTG), Asp143, and Asn184 each bind S-adenosyl-L-methionine. 184 to 187 (NPPY) lines the substrate pocket.

Belongs to the protein N5-glutamine methyltransferase family. PrmC subfamily.

It catalyses the reaction L-glutaminyl-[peptide chain release factor] + S-adenosyl-L-methionine = N(5)-methyl-L-glutaminyl-[peptide chain release factor] + S-adenosyl-L-homocysteine + H(+). Its function is as follows. Methylates the class 1 translation termination release factors RF1/PrfA and RF2/PrfB on the glutamine residue of the universally conserved GGQ motif. The polypeptide is Release factor glutamine methyltransferase (Deinococcus radiodurans (strain ATCC 13939 / DSM 20539 / JCM 16871 / CCUG 27074 / LMG 4051 / NBRC 15346 / NCIMB 9279 / VKM B-1422 / R1)).